A 134-amino-acid polypeptide reads, in one-letter code: UPF0102 protein Adeh_1910 (134 aa).

It belongs to the UPF0102 family.

This is UPF0102 protein Adeh_1910 from Anaeromyxobacter dehalogenans (strain 2CP-C).